The following is a 79-amino-acid chain: Probable [Fe-S]-dependent transcriptional repressor (79 aa).

C56, C61, C64, and C70 together coordinate iron-sulfur cluster.

This sequence belongs to the FeoC family.

May function as a transcriptional regulator that controls feoABC expression. The chain is Probable [Fe-S]-dependent transcriptional repressor from Serratia proteamaculans (strain 568).